Here is a 476-residue protein sequence, read N- to C-terminus: Aspartyl/glutamyl-tRNA(Asn/Gln) amidotransferase subunit B (476 aa).

It belongs to the GatB/GatE family. GatB subfamily. In terms of assembly, heterotrimer of A, B and C subunits.

It carries out the reaction L-glutamyl-tRNA(Gln) + L-glutamine + ATP + H2O = L-glutaminyl-tRNA(Gln) + L-glutamate + ADP + phosphate + H(+). It catalyses the reaction L-aspartyl-tRNA(Asn) + L-glutamine + ATP + H2O = L-asparaginyl-tRNA(Asn) + L-glutamate + ADP + phosphate + 2 H(+). In terms of biological role, allows the formation of correctly charged Asn-tRNA(Asn) or Gln-tRNA(Gln) through the transamidation of misacylated Asp-tRNA(Asn) or Glu-tRNA(Gln) in organisms which lack either or both of asparaginyl-tRNA or glutaminyl-tRNA synthetases. The reaction takes place in the presence of glutamine and ATP through an activated phospho-Asp-tRNA(Asn) or phospho-Glu-tRNA(Gln). The polypeptide is Aspartyl/glutamyl-tRNA(Asn/Gln) amidotransferase subunit B (Lactobacillus delbrueckii subsp. bulgaricus (strain ATCC 11842 / DSM 20081 / BCRC 10696 / JCM 1002 / NBRC 13953 / NCIMB 11778 / NCTC 12712 / WDCM 00102 / Lb 14)).